The sequence spans 56 residues: Large ribosomal subunit protein bL32 (56 aa).

It belongs to the bacterial ribosomal protein bL32 family.

This is Large ribosomal subunit protein bL32 from Brevibacillus brevis (strain 47 / JCM 6285 / NBRC 100599).